We begin with the raw amino-acid sequence, 126 residues long: Holo-[acyl-carrier-protein] synthase (126 aa).

The Mg(2+) site is built by aspartate 9 and glutamate 58.

It belongs to the P-Pant transferase superfamily. AcpS family. Requires Mg(2+) as cofactor.

It is found in the cytoplasm. The enzyme catalyses apo-[ACP] + CoA = holo-[ACP] + adenosine 3',5'-bisphosphate + H(+). In terms of biological role, transfers the 4'-phosphopantetheine moiety from coenzyme A to a Ser of acyl-carrier-protein. The protein is Holo-[acyl-carrier-protein] synthase of Escherichia coli (strain ATCC 8739 / DSM 1576 / NBRC 3972 / NCIMB 8545 / WDCM 00012 / Crooks).